Here is a 217-residue protein sequence, read N- to C-terminus: External core antigen (217 aa).

A signal peptide spans 1-20; that stretch reads MYLFHLCLVFACVSCPTVQA. Residues 26 to 28 are HBEAG; sequence GWL. Basic residues predominate over residues 181–210; it reads RRGSARVVRSPRRRTPSPRRRRSQSPRRRP. A disordered region spans residues 181-217; the sequence is RRGSARVVRSPRRRTPSPRRRRSQSPRRRPQSPASNC. Residues 190–196 form a 1; half-length repeat; the sequence is SPRRRTP. The tract at residues 190-211 is 3 X 8 AA approximate repeats of S-P-R-R-R-R-[PS]-Q; the sequence is SPRRRTPSPRRRRSQSPRRRPQ. A propeptide spanning residues 190–217 is cleaved from the precursor; it reads SPRRRTPSPRRRRSQSPRRRPQSPASNC. A run of 2 repeats spans residues 197–204 and 205–211.

This sequence belongs to the orthohepadnavirus precore antigen family. Homodimerizes. Post-translationally, phosphorylated. In terms of processing, cleaved by host furin.

It localises to the secreted. It is found in the host nucleus. Functionally, may regulate immune response to the intracellular capsid in acting as a T-cell tolerogen, by having an immunoregulatory effect which prevents destruction of infected cells by cytotoxic T-cells. This immune regulation may predispose to chronicity during perinatal infections and prevent severe liver injury during adult infections. In Urocitellus parryii kennicottii (ASHV), this protein is External core antigen.